The following is a 701-amino-acid chain: Pseudouridylate synthase PUS7L (701 aa).

Residue S79 is modified to Phosphoserine. D339 (nucleophile) is an active-site residue. Positions 424 to 647 (GFVNYYGPQR…PGCYRQILKH (224 aa)) constitute a TRUD domain.

Belongs to the pseudouridine synthase TruD family.

It carries out the reaction a uridine in mRNA = a pseudouridine in mRNA. In terms of biological role, pseudouridine synthase that catalyzes pseudouridylation of mRNAs. The protein is Pseudouridylate synthase PUS7L of Homo sapiens (Human).